A 990-amino-acid chain; its full sequence is Bifunctional glutamine synthetase adenylyltransferase/adenylyl-removing enzyme (990 aa).

Residues 1–474 (MPTDNENSMT…HFNELVEESQ (474 aa)) are adenylyl removase. Residues 484 to 990 (FIACQDAWRL…WDTLFGTCSE (507 aa)) form an adenylyl transferase region.

The protein belongs to the GlnE family. Mg(2+) serves as cofactor.

The catalysed reaction is [glutamine synthetase]-O(4)-(5'-adenylyl)-L-tyrosine + phosphate = [glutamine synthetase]-L-tyrosine + ADP. It carries out the reaction [glutamine synthetase]-L-tyrosine + ATP = [glutamine synthetase]-O(4)-(5'-adenylyl)-L-tyrosine + diphosphate. Involved in the regulation of glutamine synthetase GlnA, a key enzyme in the process to assimilate ammonia. When cellular nitrogen levels are high, the C-terminal adenylyl transferase (AT) inactivates GlnA by covalent transfer of an adenylyl group from ATP to specific tyrosine residue of GlnA, thus reducing its activity. Conversely, when nitrogen levels are low, the N-terminal adenylyl removase (AR) activates GlnA by removing the adenylyl group by phosphorolysis, increasing its activity. The regulatory region of GlnE binds the signal transduction protein PII (GlnB) which indicates the nitrogen status of the cell. The protein is Bifunctional glutamine synthetase adenylyltransferase/adenylyl-removing enzyme of Alteromonas mediterranea (strain DSM 17117 / CIP 110805 / LMG 28347 / Deep ecotype).